The following is a 287-amino-acid chain: Fructose-1,6-bisphosphatase class 1 (287 aa).

Mg(2+) is bound by residues Glu67, Asp87, Leu89, and Asp90. Substrate is bound by residues 90–93 (DGSS), Tyr195, and Lys225. Glu231 is a Mg(2+) binding site.

Belongs to the FBPase class 1 family. In terms of assembly, homotetramer. Mg(2+) serves as cofactor.

The protein resides in the cytoplasm. The catalysed reaction is beta-D-fructose 1,6-bisphosphate + H2O = beta-D-fructose 6-phosphate + phosphate. It participates in carbohydrate biosynthesis; gluconeogenesis. The chain is Fructose-1,6-bisphosphatase class 1 from Halobacterium salinarum (strain ATCC 29341 / DSM 671 / R1).